The following is a 234-amino-acid chain: HTH-type transcriptional regulator SmoD (234 aa).

Residues 8–76 (LPMYMQIAEM…QGSGNYIRAV (69 aa)) form the HTH gntR-type domain. Positions 36 to 55 (ERDMAADLGIAVGTLRKSLA) form a DNA-binding region, H-T-H motif.

It localises to the cytoplasm. In terms of biological role, probably regulates expression of genes involved in the sulfoquinovose monooxygenase (sulfo-SMO) pathway (smoABCDEFGHI). The protein is HTH-type transcriptional regulator SmoD of Agrobacterium fabrum (strain C58 / ATCC 33970) (Agrobacterium tumefaciens (strain C58)).